Consider the following 429-residue polypeptide: C4-dicarboxylate transport protein (429 aa).

8 helical membrane passes run 9–29 (VLYV…HFYP), 45–65 (LIKM…IAGM), 79–99 (LLYF…ATHI), 149–169 (GEIL…AHLG), 185–205 (VLFG…FGAM), 223–243 (LIGT…GTIA), 308–328 (IYMT…LTWM), and 356–376 (AATL…ILGI).

Belongs to the dicarboxylate/amino acid:cation symporter (DAACS) (TC 2.A.23) family.

It is found in the cell inner membrane. Its function is as follows. Responsible for the transport of dicarboxylates such as succinate, fumarate, and malate from the periplasm across the membrane. This chain is C4-dicarboxylate transport protein, found in Burkholderia ambifaria (strain ATCC BAA-244 / DSM 16087 / CCUG 44356 / LMG 19182 / AMMD) (Burkholderia cepacia (strain AMMD)).